A 113-amino-acid chain; its full sequence is Protein translation factor SUI1 homolog 1 (113 aa).

The interval 1–24 (MSELDSQVPTAFDPFADANAEDSG) is disordered. Ser2 carries the N-acetylserine modification.

The protein belongs to the SUI1 family.

Its function is as follows. Probably involved in translation. The protein is Protein translation factor SUI1 homolog 1 of Arabidopsis thaliana (Mouse-ear cress).